Here is a 275-residue protein sequence, read N- to C-terminus: Methylglyoxal reductase DkgA (275 aa).

The active-site Proton donor is Tyr51. His107 provides a ligand contact to substrate. 187 to 241 (SPLAQGGEGVFDQKVIRELADKYGKTPAQIVIRWHLDCGLVVIPKSVTPSRIAEN) is an NADP(+) binding site.

This sequence belongs to the aldo/keto reductase family. In terms of assembly, monomer.

It is found in the cytoplasm. It carries out the reaction hydroxyacetone + NADP(+) = methylglyoxal + NADPH + H(+). Its function is as follows. Aldo-keto reductase that significantly contributes to cellular methylglyoxal detoxification by catalyzing the NADPH-dependent conversion of methylglyoxal to acetol. This Salmonella typhimurium (strain LT2 / SGSC1412 / ATCC 700720) protein is Methylglyoxal reductase DkgA.